The chain runs to 1071 residues: DNA-directed RNA polymerase subunit beta (1071 aa).

Belongs to the RNA polymerase beta chain family. In plastids the minimal PEP RNA polymerase catalytic core is composed of four subunits: alpha, beta, beta', and beta''. When a (nuclear-encoded) sigma factor is associated with the core the holoenzyme is formed, which can initiate transcription.

The protein localises to the plastid. It localises to the chloroplast. It carries out the reaction RNA(n) + a ribonucleoside 5'-triphosphate = RNA(n+1) + diphosphate. In terms of biological role, DNA-dependent RNA polymerase catalyzes the transcription of DNA into RNA using the four ribonucleoside triphosphates as substrates. The protein is DNA-directed RNA polymerase subunit beta of Acorus gramineus (Dwarf sweet flag).